The chain runs to 391 residues: Elongation factor Tu 2 (391 aa).

The 192-residue stretch at 10 to 201 (KPHVNIGTIG…EVDNYIPTPE (192 aa)) folds into the tr-type G domain. The interval 19 to 26 (GHVDHGKT) is G1. 19 to 26 (GHVDHGKT) is a GTP binding site. Thr26 contacts Mg(2+). The G2 stretch occupies residues 55-59 (GITIS). The tract at residues 76-79 (DCPG) is G3. GTP-binding positions include 76 to 80 (DCPGH) and 131 to 134 (NKVD). Residues 131–134 (NKVD) form a G4 region. The G5 stretch occupies residues 169 to 171 (SAL).

It belongs to the TRAFAC class translation factor GTPase superfamily. Classic translation factor GTPase family. EF-Tu/EF-1A subfamily. Monomer.

The protein resides in the cytoplasm. The catalysed reaction is GTP + H2O = GDP + phosphate + H(+). GTP hydrolase that promotes the GTP-dependent binding of aminoacyl-tRNA to the A-site of ribosomes during protein biosynthesis. This chain is Elongation factor Tu 2, found in Bartonella quintana (strain Toulouse) (Rochalimaea quintana).